Consider the following 140-residue polypeptide: Ribosome-binding factor A (140 aa).

It belongs to the RbfA family. As to quaternary structure, monomer. Binds 30S ribosomal subunits, but not 50S ribosomal subunits or 70S ribosomes.

The protein localises to the cytoplasm. One of several proteins that assist in the late maturation steps of the functional core of the 30S ribosomal subunit. Associates with free 30S ribosomal subunits (but not with 30S subunits that are part of 70S ribosomes or polysomes). Required for efficient processing of 16S rRNA. May interact with the 5'-terminal helix region of 16S rRNA. This is Ribosome-binding factor A from Cereibacter sphaeroides (strain ATCC 17025 / ATH 2.4.3) (Rhodobacter sphaeroides).